We begin with the raw amino-acid sequence, 447 residues long: Citrate synthase-like protein oryE (447 aa).

Residues His-331 and Asp-387 contribute to the active site.

The protein belongs to the citrate synthase family.

It functions in the pathway secondary metabolite biosynthesis. Citrate synthase-like protein; part of the gene cluster that mediates the biosynthesis of oryzines, natural products with an unusual maleidride backbone. The two subunits of the fungal fatty acid synthase oryfasA and oryfasB probably form octenoic acid. This fatty acid is most likely activated by the acyl-CoA ligase oryP to give octenyl-CoA before the citrate synthase-like protein oryE catalyzes condensation with oxaloacetate to form tricarboxylic acid. The next steps of the pathways are conjectural, but a favorite possible route has been proposed, beginning with decarboxylation and concomitant dehydration by the decarboxylase oryM, followed by tautomerization, which may lead to the production of a diene intermediate. Reduction of this diene intermediate could give the known metabolite piliformic acid. On the pathway to oryzine B and oryzine A, however, hydroxylation of the diene by the alpha-ketoglutarate-dependent dioxygenase oryG and lactonisation by the lactonohydrolases oryH or oryL could give oryzine B directly. Finally, enoyl reduction by the dehydrogenase oryD would then convert oryzine B into oryzine A. The sequence is that of Citrate synthase-like protein oryE from Aspergillus oryzae (strain ATCC 42149 / RIB 40) (Yellow koji mold).